The following is a 123-amino-acid chain: MSVAILGKGKKVALKRRHARIRKRISGTPERPRLVVTRSNRHMVAQVVDDTKGITLVSASTLQADFAGFEGTKTEAAKKVGELIAEKAKAAGITAVVFDRGGNKYTGRVAAVADGAREGGLAL.

It belongs to the universal ribosomal protein uL18 family. In terms of assembly, part of the 50S ribosomal subunit; part of the 5S rRNA/L5/L18/L25 subcomplex. Contacts the 5S and 23S rRNAs.

Functionally, this is one of the proteins that bind and probably mediate the attachment of the 5S RNA into the large ribosomal subunit, where it forms part of the central protuberance. This chain is Large ribosomal subunit protein uL18, found in Bifidobacterium longum (strain DJO10A).